A 238-amino-acid polypeptide reads, in one-letter code: 2-C-methyl-D-erythritol 4-phosphate cytidylyltransferase (238 aa).

Belongs to the IspD/TarI cytidylyltransferase family. IspD subfamily.

It carries out the reaction 2-C-methyl-D-erythritol 4-phosphate + CTP + H(+) = 4-CDP-2-C-methyl-D-erythritol + diphosphate. It functions in the pathway isoprenoid biosynthesis; isopentenyl diphosphate biosynthesis via DXP pathway; isopentenyl diphosphate from 1-deoxy-D-xylulose 5-phosphate: step 2/6. Catalyzes the formation of 4-diphosphocytidyl-2-C-methyl-D-erythritol from CTP and 2-C-methyl-D-erythritol 4-phosphate (MEP). The protein is 2-C-methyl-D-erythritol 4-phosphate cytidylyltransferase of Aliivibrio fischeri (strain ATCC 700601 / ES114) (Vibrio fischeri).